A 278-amino-acid chain; its full sequence is Elongation factor Ts (278 aa).

The interval threonine 82–valine 85 is involved in Mg(2+) ion dislocation from EF-Tu.

Belongs to the EF-Ts family.

The protein resides in the cytoplasm. Functionally, associates with the EF-Tu.GDP complex and induces the exchange of GDP to GTP. It remains bound to the aminoacyl-tRNA.EF-Tu.GTP complex up to the GTP hydrolysis stage on the ribosome. This is Elongation factor Ts from Streptomyces avermitilis (strain ATCC 31267 / DSM 46492 / JCM 5070 / NBRC 14893 / NCIMB 12804 / NRRL 8165 / MA-4680).